A 92-amino-acid chain; its full sequence is Small ribosomal subunit protein uS19 (92 aa).

The segment at 72 to 92 (GEFSPTRSFRGHAGAKNKGKK) is disordered. Residues 80 to 92 (FRGHAGAKNKGKK) are compositionally biased toward basic residues.

This sequence belongs to the universal ribosomal protein uS19 family.

In terms of biological role, protein S19 forms a complex with S13 that binds strongly to the 16S ribosomal RNA. The sequence is that of Small ribosomal subunit protein uS19 from Flavobacterium johnsoniae (strain ATCC 17061 / DSM 2064 / JCM 8514 / BCRC 14874 / CCUG 350202 / NBRC 14942 / NCIMB 11054 / UW101) (Cytophaga johnsonae).